The sequence spans 720 residues: Putative glutamine--fructose-6-phosphate aminotransferase [isomerizing] (720 aa).

C2 acts as the Nucleophile; for GATase activity in catalysis. A Glutamine amidotransferase type-2 domain is found at 2–321; that stretch reads CGIFGYCNFL…DNDTAHIYDG (320 aa). The span at 266 to 280 shows a compositional bias: polar residues; that stretch reads STTSTFNHGSSTETP. Positions 266-285 are disordered; it reads STTSTFNHGSSTETPAENGL. 2 consecutive SIS domains span residues 393 to 532 and 565 to 710; these read WLTE…DLVS and CDKK…VDLP.

The catalysed reaction is D-fructose 6-phosphate + L-glutamine = D-glucosamine 6-phosphate + L-glutamate. It participates in nucleotide-sugar biosynthesis; UDP-N-acetyl-alpha-D-glucosamine biosynthesis; alpha-D-glucosamine 6-phosphate from D-fructose 6-phosphate: step 1/1. Its function is as follows. Involved in amino sugar synthesis (formation of chitin, supplies the amino sugars of asparagine-linked oligosaccharides of glycoproteins). In Saccharomyces cerevisiae (strain JAY291) (Baker's yeast), this protein is Putative glutamine--fructose-6-phosphate aminotransferase [isomerizing].